The primary structure comprises 166 residues: Small ribosomal subunit protein cS23z (166 aa).

It belongs to the chloroplast-specific ribosomal protein cS23 family. Part of the 30S ribosomal subunit.

Its subcellular location is the plastid. The protein resides in the chloroplast. Its function is as follows. Component of the chloroplast ribosome (chloro-ribosome), a dedicated translation machinery responsible for the synthesis of chloroplast genome-encoded proteins, including proteins of the transcription and translation machinery and components of the photosynthetic apparatus. The chain is Small ribosomal subunit protein cS23z from Arabidopsis thaliana (Mouse-ear cress).